Here is a 212-residue protein sequence, read N- to C-terminus: EFC-associated protein OPG053 (212 aa).

At 1-175 (MAETKEFKTL…IIENRLPYYD (175 aa)) the chain is on the virion surface side. 3 disulfide bridges follow: Cys-33–Cys-55, Cys-47–Cys-127, and Cys-107–Cys-149. A helical transmembrane segment spans residues 176–196 (PWFLVGVAIILVIFTVAICSI). Residues 197-212 (RRNLALKYRYGTFLYV) lie on the Intravirion side of the membrane.

Belongs to the orthopoxvirus OPG053 family. As to quaternary structure, component of the entry fusion complex (EFC) composed of OPG053, OPG076, OPG086, OPG094, OPG095, OPG099, OPG107, OPG143, OPG104, OPG147 and OPG155. Except for OPG095 and OPG052, each of the EFC proteins is required for assembly or stability of the complex. Disulfid bonds are oxidized in the cytoplasm by OPG088 protein. In terms of processing, unglycosylated because produced in viral factories instead of the classic ER -Golgi route.

Its subcellular location is the virion membrane. Component of the entry fusion complex (EFC), which consists of 11 proteins. During cell infection, this complex mediates entry of the virion core into the host cytoplasm by a two-step mechanism consisting of lipid mixing of the viral and cellular membranes and subsequent pore formation. The sequence is that of EFC-associated protein OPG053 (OPG053) from Homo sapiens (Human).